The following is a 472-amino-acid chain: Uronate isomerase (472 aa).

Belongs to the metallo-dependent hydrolases superfamily. Uronate isomerase family.

The enzyme catalyses D-glucuronate = D-fructuronate. It catalyses the reaction aldehydo-D-galacturonate = keto-D-tagaturonate. Its pathway is carbohydrate metabolism; pentose and glucuronate interconversion. In Nostoc punctiforme (strain ATCC 29133 / PCC 73102), this protein is Uronate isomerase.